The sequence spans 116 residues: Phosphoribosyl-AMP cyclohydrolase (116 aa).

D78 contacts Mg(2+). C79 contacts Zn(2+). 2 residues coordinate Mg(2+): D80 and D82. The Zn(2+) site is built by C95 and C102.

The protein belongs to the PRA-CH family. As to quaternary structure, homodimer. Mg(2+) is required as a cofactor. It depends on Zn(2+) as a cofactor.

The protein localises to the cytoplasm. The enzyme catalyses 1-(5-phospho-beta-D-ribosyl)-5'-AMP + H2O = 1-(5-phospho-beta-D-ribosyl)-5-[(5-phospho-beta-D-ribosylamino)methylideneamino]imidazole-4-carboxamide. The protein operates within amino-acid biosynthesis; L-histidine biosynthesis; L-histidine from 5-phospho-alpha-D-ribose 1-diphosphate: step 3/9. Functionally, catalyzes the hydrolysis of the adenine ring of phosphoribosyl-AMP. The chain is Phosphoribosyl-AMP cyclohydrolase from Acidiphilium cryptum (strain JF-5).